Consider the following 172-residue polypeptide: Protein GrpE (172 aa).

Residues 1–24 (MNQDHPEFDSEDLAQNPPETDPLK) form a disordered region.

This sequence belongs to the GrpE family. As to quaternary structure, homodimer.

The protein resides in the cytoplasm. In terms of biological role, participates actively in the response to hyperosmotic and heat shock by preventing the aggregation of stress-denatured proteins, in association with DnaK and GrpE. It is the nucleotide exchange factor for DnaK and may function as a thermosensor. Unfolded proteins bind initially to DnaJ; upon interaction with the DnaJ-bound protein, DnaK hydrolyzes its bound ATP, resulting in the formation of a stable complex. GrpE releases ADP from DnaK; ATP binding to DnaK triggers the release of the substrate protein, thus completing the reaction cycle. Several rounds of ATP-dependent interactions between DnaJ, DnaK and GrpE are required for fully efficient folding. This Xanthomonas oryzae pv. oryzae (strain PXO99A) protein is Protein GrpE.